The sequence spans 37 residues: Large ribosomal subunit protein bL36 (37 aa).

It belongs to the bacterial ribosomal protein bL36 family.

The sequence is that of Large ribosomal subunit protein bL36 from Desulfitobacterium hafniense (strain Y51).